We begin with the raw amino-acid sequence, 124 residues long: Small ribosomal subunit protein uS12 (124 aa).

3-methylthioaspartic acid is present on aspartate 89.

This sequence belongs to the universal ribosomal protein uS12 family. In terms of assembly, part of the 30S ribosomal subunit. Contacts proteins S8 and S17. May interact with IF1 in the 30S initiation complex.

Functionally, with S4 and S5 plays an important role in translational accuracy. In terms of biological role, interacts with and stabilizes bases of the 16S rRNA that are involved in tRNA selection in the A site and with the mRNA backbone. Located at the interface of the 30S and 50S subunits, it traverses the body of the 30S subunit contacting proteins on the other side and probably holding the rRNA structure together. The combined cluster of proteins S8, S12 and S17 appears to hold together the shoulder and platform of the 30S subunit. This is Small ribosomal subunit protein uS12 from Shewanella denitrificans (strain OS217 / ATCC BAA-1090 / DSM 15013).